Here is a 635-residue protein sequence, read N- to C-terminus: Threonine--tRNA ligase (635 aa).

In terms of domain architecture, TGS spans 1–61 (MIAITLPDGS…EQNVDLAIVT (61 aa)). The tract at residues 242-533 (DHRKLGKLLD…LLENHAGALP (292 aa)) is catalytic. Positions 333, 384, and 510 each coordinate Zn(2+).

The protein belongs to the class-II aminoacyl-tRNA synthetase family. As to quaternary structure, homodimer. Zn(2+) serves as cofactor.

The protein localises to the cytoplasm. It catalyses the reaction tRNA(Thr) + L-threonine + ATP = L-threonyl-tRNA(Thr) + AMP + diphosphate + H(+). Its function is as follows. Catalyzes the attachment of threonine to tRNA(Thr) in a two-step reaction: L-threonine is first activated by ATP to form Thr-AMP and then transferred to the acceptor end of tRNA(Thr). Also edits incorrectly charged L-seryl-tRNA(Thr). The protein is Threonine--tRNA ligase of Ralstonia nicotianae (strain ATCC BAA-1114 / GMI1000) (Ralstonia solanacearum).